Here is a 593-residue protein sequence, read N- to C-terminus: Maternal uncoordinated protein 2 (593 aa).

Belongs to the SCC4/mau-2 family. In terms of assembly, may heterodimerize with scc-2/SCC2 to form the cohesin loading complex.

It localises to the nucleus. It is found in the nucleoplasm. The protein localises to the cytoplasm. Functionally, plays an important role in the loading of the cohesin complex on to DNA. Forms a heterodimeric complex (also known as cohesin loading complex) with scc-2/SCC2 which mediates the loading of the cohesin complex onto chromatin. Required for normal development until the fourth larval stage. Functions cell autonomously to guide migrations during the development of the nervous system. Participates in the guidance of mechanosensory neuron AVM by a slt-1-independent mechanism. Regulates chromosome segregation in early embryos. This is Maternal uncoordinated protein 2 from Caenorhabditis elegans.